Consider the following 479-residue polypeptide: PTS system sucrose-specific EIIBC component (479 aa).

Positions 4–87 constitute a PTS EIIB type-1 domain; it reads PAVAKELLTL…AKLTGMSEMS (84 aa). The Phosphocysteine intermediate; for EIIB activity role is filled by C26. Transmembrane regions (helical) follow at residues 112-132, 158-178, 182-202, 204-224, 232-252, 264-284, 303-323, 345-365, 376-396, 403-423, and 448-468; these read IFVP…IYNL, MINT…AFSA, FGGN…PDLL, GWGF…ILGF, QGSV…ELGL, LTPL…VGPF, AGFV…ITGM, FIFP…LAVG, IAIP…MFGV, PFIA…MFNV, and IAGM…LGIG. The 358-residue stretch at 120–477 folds into the PTS EIIC type-1 domain; that stretch reads IVAGGLLMGI…GDRAKVGKKA (358 aa).

The protein localises to the cell inner membrane. It carries out the reaction N(pros)-phospho-L-histidyl-[protein](out) + sucrose = sucrose 6(G)-phosphate(in) + L-histidyl-[protein]. Its function is as follows. The phosphoenolpyruvate-dependent sugar phosphotransferase system (sugar PTS), a major carbohydrate active transport system, catalyzes the phosphorylation of incoming sugar substrates concomitantly with their translocation across the cell membrane. This system is involved in sucrose transport. This is PTS system sucrose-specific EIIBC component from Vibrio alginolyticus.